The chain runs to 460 residues: Lipase member I (460 aa).

The first 15 residues, 1 to 15 (MRVYIFLCLMCWVRS), serve as a signal peptide directing secretion. N-linked (GlcNAc...) asparagine glycosylation occurs at Asn-63. The active-site Nucleophile is the Ser-159. Asp-183 functions as the Charge relay system in the catalytic mechanism. A disulfide bridge connects residues Cys-238 and Cys-251. The Charge relay system role is filled by His-253. Intrachain disulfides connect Cys-275/Cys-286 and Cys-289/Cys-297. Asn-396 carries an N-linked (GlcNAc...) asparagine glycan. Cys-436 and Cys-455 are oxidised to a cystine.

It belongs to the AB hydrolase superfamily. Lipase family. As to quaternary structure, interacts with heparin with a high affinity. In terms of tissue distribution, expressed in testis. Expressed exclusively at the connecting piece of the sperm.

The protein resides in the cell membrane. Its subcellular location is the secreted. It catalyses the reaction 1-hexadecanoyl-2-(9Z-octadecenoyl)-sn-glycero-3-phosphate + H2O = 2-(9Z-octadecenoyl)-sn-glycero-3-phosphate + hexadecanoate + H(+). Inhibited by sodium vanadate. Hydrolyzes specifically phosphatidic acid (PA) to produce 2-acyl lysophosphatidic acid (LPA; a potent bioactive lipid mediator) and fatty acid. Does not hydrolyze other phospholipids, like phosphatidylserine (PS), phosphatidylcholine (PC) and phosphatidylethanolamine (PE) or triacylglycerol (TG). This chain is Lipase member I (LIPI), found in Homo sapiens (Human).